Consider the following 85-residue polypeptide: Small integral membrane protein 35 (85 aa).

Residues I7–G27 form a helical membrane-spanning segment.

The protein localises to the membrane. This chain is Small integral membrane protein 35, found in Mus musculus (Mouse).